The primary structure comprises 562 residues: Protein wntless (562 aa).

Topologically, residues 1-13 (MSGTILENLSGRK) are cytoplasmic. A helical transmembrane segment spans residues 14-34 (LSILVSSLMLCQVACFLMGGL). The Lumenal portion of the chain corresponds to 35-239 (YAPVPAGHQT…AIHQNGGFTQ (205 aa)). N-linked (GlcNAc...) asparagine glycans are attached at residues Asn-58 and Asn-103. The chain crosses the membrane as a helical span at residues 240–260 (VWLLLKTLLFPFVVGIMIWFW). The Cytoplasmic segment spans residues 261 to 270 (RRVHILQRSP). Residues 271–291 (ALLEYMLLYLGGALSFLNLPL) form a helical membrane-spanning segment. Residues 292–311 (EYLTLSIEMPYMLLLSDVRQ) lie on the Lumenal side of the membrane. A helical membrane pass occupies residues 312–332 (GIFYAMLLSFWLVFAGEHMLI). Topologically, residues 333 to 344 (QDTPNKSTIRSR) are cytoplasmic. Residues 345–365 (YWKHLSAVVVGCISLFVFDIC) form a helical membrane-spanning segment. Residues 366-390 (ERGVQLRNPFYSIWTTPLGAKVAMS) are Lumenal-facing. A helical transmembrane segment spans residues 391–411 (FIVLAGVSAAIYFLFLCFMVW). Over 412 to 441 (KVFKDIGDKRTSLPSMSQARRLHYEGLIYR) the chain is Cytoplasmic. A helical transmembrane segment spans residues 442–462 (FKFLMLATLLCAGLTVAGFIM). Residues 463 to 482 (GQMAEGHWKWNEDIEIQLTS) lie on the Lumenal side of the membrane. Residues 483–503 (AFLTGVYGMWNIYIFALIILY) traverse the membrane as a helical segment. Residues 504–562 (APSHKQWPTMRHSDETTQSNENIVASAASEEIEFSNLPSDSNPSEISSLTSFTRKVAFD) are Cytoplasmic-facing.

This sequence belongs to the wntless family. In terms of assembly, interacts with wg; in the Golgi. Interacts with Vps35, a component of the retromer complex; wls stability is regulated by Vps35.

Its subcellular location is the presynaptic cell membrane. It localises to the postsynaptic cell membrane. The protein localises to the cell membrane. The protein resides in the endoplasmic reticulum membrane. It is found in the endosome membrane. Its subcellular location is the golgi apparatus membrane. In terms of biological role, a segment polarity gene required for wingless (wg)-dependent patterning processes, acting in both wg-sending cells and wg-target cells. In non-neuronal cells wls directs wg secretion. The wls traffic loop encompasses the Golgi, the cell surface, an endocytic compartment and a retrograde route leading back to the Golgi, and involves clathrin-mediated endocytosis and the retromer complex (a conserved protein complex consisting of Vps35 and Vps26). In neuronal cells (the larval motorneuron NMJ), the wg signal moves across the synapse via the release of wls-containing exosome-like vesicles. Postsynaptic wls is required for the trafficking of fz2 through the fz2-interacting protein Grip. The sequence is that of Protein wntless from Drosophila virilis (Fruit fly).